We begin with the raw amino-acid sequence, 233 residues long: Superoxide dismutase [Mn] 3.4, mitochondrial (233 aa).

The transit peptide at 1–29 (MALRTLASKNALSFALGGAARPSAASARG) directs the protein to the mitochondrion. Mn(2+) contacts are provided by His-57, His-105, Asp-194, and His-198.

It belongs to the iron/manganese superoxide dismutase family. Homotetramer. Mn(2+) is required as a cofactor.

It localises to the mitochondrion matrix. It catalyses the reaction 2 superoxide + 2 H(+) = H2O2 + O2. Destroys superoxide anion radicals which are normally produced within the cells and which are toxic to biological systems. The protein is Superoxide dismutase [Mn] 3.4, mitochondrial (SODA.3) of Zea mays (Maize).